The following is a 155-amino-acid chain: Large ribosomal subunit protein uL30 (155 aa).

The protein belongs to the universal ribosomal protein uL30 family. As to quaternary structure, part of the 50S ribosomal subunit.

This is Large ribosomal subunit protein uL30 from Pyrococcus furiosus (strain ATCC 43587 / DSM 3638 / JCM 8422 / Vc1).